A 145-amino-acid chain; its full sequence is MYLIWIIGGGQKDLTNKILDEIKKLYEQLDEIKDKNINSSNVQLNEFMRQNVNMLKELNQKIDKYLENNNEILKEMEKYVKEDIEHKNRMERKLKQISMLLLIVIIAIGLTISYMVILNNEYLSTQLFNYIQIAIQYLKSLLSNY.

A helical transmembrane segment spans residues 97–117; the sequence is ISMLLLIVIIAIGLTISYMVI.

It is found in the membrane. This is an uncharacterized protein from Methanocaldococcus jannaschii (strain ATCC 43067 / DSM 2661 / JAL-1 / JCM 10045 / NBRC 100440) (Methanococcus jannaschii).